A 134-amino-acid chain; its full sequence is Ribonuclease VapC1 (134 aa).

A PINc domain is found at 4-123; sequence IIDTSIIIAL…LNVKDFKRIQ (120 aa). Mg(2+)-binding residues include D6 and D97.

The protein belongs to the PINc/VapC protein family. The cofactor is Mg(2+).

Its function is as follows. Toxic component of a type II toxin-antitoxin (TA) system. Has ssRNase activity. Upon expression in E.coli inhibits growth in liquid culture; this toxic effect is neutralized by coexpression with cognate antitoxin VapB1. Its RNase activity is partially inhibited in vitro by VapB1. The chain is Ribonuclease VapC1 from Rickettsia felis (strain ATCC VR-1525 / URRWXCal2) (Rickettsia azadi).